A 124-amino-acid polypeptide reads, in one-letter code: UPF0482 protein YpsIP31758_1865 (124 aa).

The first 32 residues, 1–32, serve as a signal peptide directing secretion; it reads MMKINNLPRLIRTFLPATLLMLPLVWQTPALA. Residues 47 to 68 form a disordered region; sequence GGNNDPMSKEQARQSQQQWDET.

This sequence belongs to the UPF0482 family.

This is UPF0482 protein YpsIP31758_1865 from Yersinia pseudotuberculosis serotype O:1b (strain IP 31758).